The following is a 387-amino-acid chain: Chorismate synthase (387 aa).

NADP(+) contacts are provided by Arg-39 and Arg-45. FMN contacts are provided by residues 130-132 (RSS), 251-252 (NA), Gly-295, 310-314 (KPIPT), and Arg-336.

Belongs to the chorismate synthase family. Homotetramer. FMNH2 is required as a cofactor.

The catalysed reaction is 5-O-(1-carboxyvinyl)-3-phosphoshikimate = chorismate + phosphate. It functions in the pathway metabolic intermediate biosynthesis; chorismate biosynthesis; chorismate from D-erythrose 4-phosphate and phosphoenolpyruvate: step 7/7. Catalyzes the anti-1,4-elimination of the C-3 phosphate and the C-6 proR hydrogen from 5-enolpyruvylshikimate-3-phosphate (EPSP) to yield chorismate, which is the branch point compound that serves as the starting substrate for the three terminal pathways of aromatic amino acid biosynthesis. This reaction introduces a second double bond into the aromatic ring system. In Exiguobacterium sp. (strain ATCC BAA-1283 / AT1b), this protein is Chorismate synthase.